The sequence spans 500 residues: Cytochrome P450 71B36 (500 aa).

A helical transmembrane segment spans residues 1–21 (MATILFLSLLFLSCILLAAFT). Cys-440 lines the heme pocket.

It belongs to the cytochrome P450 family. The cofactor is heme.

It localises to the membrane. The chain is Cytochrome P450 71B36 (CYP71B36) from Arabidopsis thaliana (Mouse-ear cress).